The chain runs to 193 residues: Acyl carrier protein phosphodiesterase (193 aa).

The protein belongs to the AcpH family.

It carries out the reaction holo-[ACP] + H2O = apo-[ACP] + (R)-4'-phosphopantetheine + H(+). Its function is as follows. Converts holo-ACP to apo-ACP by hydrolytic cleavage of the phosphopantetheine prosthetic group from ACP. The sequence is that of Acyl carrier protein phosphodiesterase from Klebsiella pneumoniae (strain 342).